We begin with the raw amino-acid sequence, 255 residues long: Type III pantothenate kinase (255 aa).

An ATP-binding site is contributed by 6 to 13; it reads DVGNTNIV. Substrate contacts are provided by residues Y100 and 107–110; that span reads GADR. Catalysis depends on D109, which acts as the Proton acceptor. D129 provides a ligand contact to K(+). ATP is bound at residue T132. Substrate is bound at residue T184.

This sequence belongs to the type III pantothenate kinase family. Homodimer. NH4(+) is required as a cofactor. Requires K(+) as cofactor.

Its subcellular location is the cytoplasm. It catalyses the reaction (R)-pantothenate + ATP = (R)-4'-phosphopantothenate + ADP + H(+). Its pathway is cofactor biosynthesis; coenzyme A biosynthesis; CoA from (R)-pantothenate: step 1/5. In terms of biological role, catalyzes the phosphorylation of pantothenate (Pan), the first step in CoA biosynthesis. This chain is Type III pantothenate kinase, found in Geobacter sulfurreducens (strain ATCC 51573 / DSM 12127 / PCA).